Consider the following 564-residue polypeptide: CTP synthase (564 aa).

Positions 1–265 (MTKFVFVTGG…DEIVCHRLDI (265 aa)) are amidoligase domain. Residue Ser-13 coordinates CTP. A UTP-binding site is contributed by Ser-13. ATP contacts are provided by residues 14–19 (SLGKGI) and Asp-71. Positions 71 and 139 each coordinate Mg(2+). Residues 146–148 (DIE), 186–191 (KTKPTQ), and Lys-222 contribute to the CTP site. UTP contacts are provided by residues 186 to 191 (KTKPTQ) and Lys-222. In terms of domain architecture, Glutamine amidotransferase type-1 spans 290-543 (SIALVGKYVD…IQAAISFAGQ (254 aa)). Gly-351 is a binding site for L-glutamine. Cys-378 (nucleophile; for glutamine hydrolysis) is an active-site residue. L-glutamine contacts are provided by residues 379–382 (LGMQ), Glu-402, and Arg-469. Catalysis depends on residues His-516 and Glu-518.

This sequence belongs to the CTP synthase family. Homotetramer.

The enzyme catalyses UTP + L-glutamine + ATP + H2O = CTP + L-glutamate + ADP + phosphate + 2 H(+). It catalyses the reaction L-glutamine + H2O = L-glutamate + NH4(+). The catalysed reaction is UTP + NH4(+) + ATP = CTP + ADP + phosphate + 2 H(+). It functions in the pathway pyrimidine metabolism; CTP biosynthesis via de novo pathway; CTP from UDP: step 2/2. With respect to regulation, allosterically activated by GTP, when glutamine is the substrate; GTP has no effect on the reaction when ammonia is the substrate. The allosteric effector GTP functions by stabilizing the protein conformation that binds the tetrahedral intermediate(s) formed during glutamine hydrolysis. Inhibited by the product CTP, via allosteric rather than competitive inhibition. Catalyzes the ATP-dependent amination of UTP to CTP with either L-glutamine or ammonia as the source of nitrogen. Regulates intracellular CTP levels through interactions with the four ribonucleotide triphosphates. This is CTP synthase from Nitrosomonas europaea (strain ATCC 19718 / CIP 103999 / KCTC 2705 / NBRC 14298).